The primary structure comprises 126 residues: UPF0538 protein C2orf76 homolog (126 aa).

Belongs to the UPF0538 family.

The sequence is that of UPF0538 protein C2orf76 homolog from Bos taurus (Bovine).